Reading from the N-terminus, the 130-residue chain is Small ribosomal subunit protein uS9 (130 aa).

Over residues Ala101–Met110 the composition is skewed to basic and acidic residues. The tract at residues Ala101 to Arg130 is disordered. Over residues Lys111–Arg130 the composition is skewed to basic residues.

It belongs to the universal ribosomal protein uS9 family.

The protein is Small ribosomal subunit protein uS9 of Clostridium tetani (strain Massachusetts / E88).